Consider the following 331-residue polypeptide: Protein C10 (331 aa).

The protein belongs to the poxviridae C4/C10 protein family.

This chain is Protein C10, found in Vaccinia virus (strain Copenhagen) (VACV).